The following is a 262-amino-acid chain: uncharacterized protein (262 aa).

A divalent metal cation is bound by residues His-7, His-9, Glu-96, His-132, His-156, and Asp-211.

Belongs to the metallo-dependent hydrolases superfamily. TatD-type hydrolase family. A divalent metal cation is required as a cofactor.

This is an uncharacterized protein from Mycoplasma genitalium (strain ATCC 33530 / DSM 19775 / NCTC 10195 / G37) (Mycoplasmoides genitalium).